Here is a 628-residue protein sequence, read N- to C-terminus: tRNA (carboxymethyluridine(34)-5-O)-methyltransferase alkbh8 (628 aa).

The 81-residue stretch at 43-123 folds into the RRM domain; that stretch reads QSLVVANGGL…ITLYLSFVEK (81 aa). A Fe2OG dioxygenase domain is found at 218–335; that stretch reads DPDQLTINQY…RTSFTFRKVR (118 aa). Residue 225-227 coordinates 2-oxoglutarate; the sequence is NQY. 2 residues coordinate Fe cation: H236 and D238. H240 contributes to the Zn(2+) binding site. Residue H290 participates in Fe cation binding. The 2-oxoglutarate site is built by R326 and R332. 3 residues coordinate Zn(2+): C339, C341, and C347. Positions 410–628 are methyltransferase domain; that stretch reads ADVGCGNGKY…GNWCVILEKL (219 aa). The interval 563 to 582 is disordered; it reads PTNKSKVTPENKEQNEKEHG. The span at 569-582 shows a compositional bias: basic and acidic residues; the sequence is VTPENKEQNEKEHG.

It belongs to the alkB family. Fe(2+) is required as a cofactor.

The protein localises to the cytoplasm. The protein resides in the nucleus. The enzyme catalyses 5-(carboxymethyl)uridine(34) in tRNA + S-adenosyl-L-methionine = 5-(2-methoxy-2-oxoethyl)uridine(34) in tRNA + S-adenosyl-L-homocysteine. Its function is as follows. Catalyzes the methylation of 5-carboxymethyl uridine to 5-methylcarboxymethyl uridine at the wobble position of the anticodon loop in tRNA via its methyltransferase domain. Catalyzes the last step in the formation of 5-methylcarboxymethyl uridine at the wobble position of the anticodon loop in target tRNA. Has a preference for tRNA(Arg) and tRNA(Glu), and does not bind tRNA(Lys). Binds tRNA and catalyzes the iron and alpha-ketoglutarate dependent hydroxylation of 5-methylcarboxymethyl uridine at the wobble position of the anticodon loop in tRNA via its dioxygenase domain, giving rise to 5-(S)-methoxycarbonylhydroxymethyluridine; has a preference for tRNA(Gly). Required for normal survival after DNA damage. May inhibit apoptosis and promote cell survival and angiogenesis. The chain is tRNA (carboxymethyluridine(34)-5-O)-methyltransferase alkbh8 (alkbh8) from Xenopus tropicalis (Western clawed frog).